Consider the following 384-residue polypeptide: Odorant receptor 33c (384 aa).

Residues 1–35 (MVIIDSLSFYRPFWICMRLLVPTFFKDSSRPVQLY) are Cytoplasmic-facing. Residues 36 to 56 (VVLLHILVTLWFPLHLLLHLL) form a helical membrane-spanning segment. The Extracellular portion of the chain corresponds to 57 to 63 (LLPSTAE). Residues 64 to 84 (FFKNLTMSLTCVACSLKHVAH) form a helical membrane-spanning segment. Over 85 to 128 (LYHLPQIVEIESLIEQLDTFIASEQEHRYYRDHVHCHARRFTRC) the chain is Cytoplasmic. A helical transmembrane segment spans residues 129-149 (LYISFGMIYALFLFGVFVQVI). Over 150-169 (SGNWELLYPAYFPFDLESNR) the chain is Extracellular. A helical membrane pass occupies residues 170 to 190 (FLGAVALGYQVFSMLVEGFQG). At 191–251 (LGNDTYTPLT…LVRFHNLVSR (61 aa)) the chain is on the cytoplasmic side. A helical transmembrane segment spans residues 252–272 (TISEVQLVQLGGCGATLCIIV). Residues 273-274 (SY) are Extracellular-facing. Residues 275 to 295 (MLFFVGDTISLVYYLVFFGVV) traverse the membrane as a helical segment. Residues 296–358 (CVQLFPSCYF…WIIKAGGLIE (63 aa)) are Cytoplasmic-facing. A helical membrane pass occupies residues 359 to 379 (LNLNAFFATLKMAYSLFAVVV). Over 380 to 384 (RAKGI) the chain is Extracellular.

This sequence belongs to the insect chemoreceptor superfamily. Heteromeric odorant receptor channel (TC 1.A.69) family. Or2a subfamily. In terms of assembly, interacts with Orco. Complexes exist early in the endomembrane system in olfactory sensory neurons (OSNs), coupling these complexes to the conserved ciliary trafficking pathway. Expressed in the antenna and in a subset of 18 olfactory receptor neurons in the maxillary palp.

It localises to the cell membrane. Its function is as follows. Odorant receptor which mediates acceptance or avoidance behavior, depending on its substrates. The odorant receptor repertoire encodes a large collection of odor stimuli that vary widely in identity, intensity, and duration. May form a complex with Orco to form odorant-sensing units, providing sensitive and prolonged odorant signaling and calcium permeability. The chain is Odorant receptor 33c (Or33c) from Drosophila melanogaster (Fruit fly).